We begin with the raw amino-acid sequence, 88 residues long: MDLFRAFSKPSSKDIAKERLRLILINDRCSMPQEVLEDIKEDILKVLSKYMEINYAEIDVRMTITEKVEEDPVALVANIPVKKVKYNK.

The protein belongs to the MinE family.

Functionally, prevents the cell division inhibition by proteins MinC and MinD at internal division sites while permitting inhibition at polar sites. This ensures cell division at the proper site by restricting the formation of a division septum at the midpoint of the long axis of the cell. The protein is Cell division topological specificity factor of Clostridium kluyveri (strain ATCC 8527 / DSM 555 / NBRC 12016 / NCIMB 10680 / K1).